We begin with the raw amino-acid sequence, 200 residues long: UPF0488 protein CG14286 (200 aa).

Disordered stretches follow at residues 1–28 (MHKR…PVAE) and 139–174 (KDFR…AEAG).

It belongs to the UPF0488 family.

This is UPF0488 protein CG14286 from Drosophila melanogaster (Fruit fly).